A 230-amino-acid polypeptide reads, in one-letter code: 2,3-bisphosphoglycerate-dependent phosphoglycerate mutase (230 aa).

Residues 8–15, 21–22, R60, 87–90, K98, 114–115, and 183–184 contribute to the substrate site; these read RHGESEWN, TG, ERHY, RR, and GN. The Tele-phosphohistidine intermediate role is filled by H9. E87 (proton donor/acceptor) is an active-site residue.

Belongs to the phosphoglycerate mutase family. BPG-dependent PGAM subfamily.

The enzyme catalyses (2R)-2-phosphoglycerate = (2R)-3-phosphoglycerate. Its pathway is carbohydrate degradation; glycolysis; pyruvate from D-glyceraldehyde 3-phosphate: step 3/5. In terms of biological role, catalyzes the interconversion of 2-phosphoglycerate and 3-phosphoglycerate. The sequence is that of 2,3-bisphosphoglycerate-dependent phosphoglycerate mutase from Streptococcus pneumoniae (strain P1031).